A 104-amino-acid polypeptide reads, in one-letter code: Ribonucleotide reductase inhibitor protein SML1 (104 aa).

Residue Met-1 is modified to N-acetylmethionine. A disordered region spans residues 43–62; sequence PMLSTQNSMGSSASASASSL. Phosphoserine; by DUN1 is present on residues Ser-56, Ser-58, and Ser-60.

Homodimer; disulfide-linked. Interacts with RNR1. Phosphorylated by DUN1, a downstream effector of the Mec1/Rad53 checkpoint pathway, in response to DNA damage. This promotes ubiquitination of SML1 and targets it for degradation by the 26S proteasome.

It is found in the nucleus. The protein localises to the cytoplasm. Strong inhibitor of ribonucleotide reductase (RNR1) and is involved in regulating dNTP production. The chain is Ribonucleotide reductase inhibitor protein SML1 (SML1) from Saccharomyces cerevisiae (strain ATCC 204508 / S288c) (Baker's yeast).